We begin with the raw amino-acid sequence, 189 residues long: Peptidyl-tRNA hydrolase (189 aa).

Tyr14 contributes to the tRNA binding site. His19 serves as the catalytic Proton acceptor. Residues Tyr64, Asn66, and Asn112 each contribute to the tRNA site.

The protein belongs to the PTH family. As to quaternary structure, monomer.

It is found in the cytoplasm. The enzyme catalyses an N-acyl-L-alpha-aminoacyl-tRNA + H2O = an N-acyl-L-amino acid + a tRNA + H(+). Functionally, hydrolyzes ribosome-free peptidyl-tRNAs (with 1 or more amino acids incorporated), which drop off the ribosome during protein synthesis, or as a result of ribosome stalling. In terms of biological role, catalyzes the release of premature peptidyl moieties from peptidyl-tRNA molecules trapped in stalled 50S ribosomal subunits, and thus maintains levels of free tRNAs and 50S ribosomes. The protein is Peptidyl-tRNA hydrolase of Dehalococcoides mccartyi (strain ATCC BAA-2266 / KCTC 15142 / 195) (Dehalococcoides ethenogenes (strain 195)).